We begin with the raw amino-acid sequence, 235 residues long: Urease accessory protein UreF (235 aa).

Belongs to the UreF family. As to quaternary structure, ureD, UreF and UreG form a complex that acts as a GTP-hydrolysis-dependent molecular chaperone, activating the urease apoprotein by helping to assemble the nickel containing metallocenter of UreC. The UreE protein probably delivers the nickel.

It is found in the cytoplasm. Its function is as follows. Required for maturation of urease via the functional incorporation of the urease nickel metallocenter. This chain is Urease accessory protein UreF, found in Ureaplasma urealyticum serovar 10 (strain ATCC 33699 / Western).